A 189-amino-acid polypeptide reads, in one-letter code: Cell division protein SepF (189 aa).

Residues 18–64 (EVTDHEDVAKERPVKVQKTEQTPSQQQRKPERPQETVPPRRQHIKSD) are disordered. The segment covering 22–35 (HEDVAKERPVKVQK) has biased composition (basic and acidic residues).

Belongs to the SepF family. Homodimer. Interacts with FtsZ.

It localises to the cytoplasm. Functionally, cell division protein that is part of the divisome complex and is recruited early to the Z-ring. Probably stimulates Z-ring formation, perhaps through the cross-linking of FtsZ protofilaments. Its function overlaps with FtsA. The sequence is that of Cell division protein SepF from Streptococcus thermophilus (strain ATCC BAA-250 / LMG 18311).